Here is a 273-residue protein sequence, read N- to C-terminus: Formamidopyrimidine-DNA glycosylase (273 aa).

The active-site Schiff-base intermediate with DNA is the Pro2. The active-site Proton donor is Glu3. The Proton donor; for beta-elimination activity role is filled by Lys58. DNA-binding residues include His91, Arg110, and Arg153. The FPG-type zinc finger occupies 238–272 (KVYGKEGQPCPRCGEDFVKIKISGRGTTYCLHCQK). Arg262 (proton donor; for delta-elimination activity) is an active-site residue.

The protein belongs to the FPG family. Monomer. Requires Zn(2+) as cofactor.

It carries out the reaction Hydrolysis of DNA containing ring-opened 7-methylguanine residues, releasing 2,6-diamino-4-hydroxy-5-(N-methyl)formamidopyrimidine.. The enzyme catalyses 2'-deoxyribonucleotide-(2'-deoxyribose 5'-phosphate)-2'-deoxyribonucleotide-DNA = a 3'-end 2'-deoxyribonucleotide-(2,3-dehydro-2,3-deoxyribose 5'-phosphate)-DNA + a 5'-end 5'-phospho-2'-deoxyribonucleoside-DNA + H(+). In terms of biological role, involved in base excision repair of DNA damaged by oxidation or by mutagenic agents. Acts as a DNA glycosylase that recognizes and removes damaged bases. Has a preference for oxidized purines, such as 7,8-dihydro-8-oxoguanine (8-oxoG). Has AP (apurinic/apyrimidinic) lyase activity and introduces nicks in the DNA strand. Cleaves the DNA backbone by beta-delta elimination to generate a single-strand break at the site of the removed base with both 3'- and 5'-phosphates. This chain is Formamidopyrimidine-DNA glycosylase, found in Lactobacillus delbrueckii subsp. bulgaricus (strain ATCC 11842 / DSM 20081 / BCRC 10696 / JCM 1002 / NBRC 13953 / NCIMB 11778 / NCTC 12712 / WDCM 00102 / Lb 14).